The following is a 1257-amino-acid chain: Probable aldehyde oxidase gad-3 (1257 aa).

Residues Thr-4–Val-91 form the 2Fe-2S ferredoxin-type domain. 4 residues coordinate [2Fe-2S] cluster: Cys-43, Cys-48, Cys-51, and Cys-73. Residues Leu-229–Leu-459 form the FAD-binding PCMH-type domain. The Proton acceptor role is filled by Glu-1208.

It belongs to the xanthine dehydrogenase family. Requires [2Fe-2S] cluster as cofactor. The cofactor is FAD. Mo-molybdopterin is required as a cofactor.

It carries out the reaction an aldehyde + O2 + H2O = a carboxylate + H2O2 + H(+). May be involved in the metabolism of 1-methylnicotinamide (MNA). Linked to regulation of longevity through generation of reactive oxygen species, where it probably functions in a pathway downstream of the sirtuin sir-2.1 and the nicotinamide N-methyltransferase anmt-1. The chain is Probable aldehyde oxidase gad-3 from Caenorhabditis elegans.